The following is a 98-amino-acid chain: EKC/KEOPS complex subunit GON7 (98 aa).

Position 1 is an N-acetylmethionine (Met-1). The segment at 55 to 98 is disordered; the sequence is DAQGLAEDPDDALDGDDEDDAEDENNSGRTNSDGPSAKRPKPAS. Residues 61 to 79 are compositionally biased toward acidic residues; the sequence is EDPDDALDGDDEDDAEDEN.

Component of the EKC/KEOPS complex composed of at least GON7, TP53RK, TPRKB, OSGEP and LAGE3; the whole complex dimerizes.

It is found in the nucleus. Its function is as follows. Component of the EKC/KEOPS complex that is required for the formation of a threonylcarbamoyl group on adenosine at position 37 (t(6)A37) in tRNAs that read codons beginning with adenine. The complex is probably involved in the transfer of the threonylcarbamoyl moiety of threonylcarbamoyl-AMP (TC-AMP) to the N6 group of A37. GON7 plays a supporting role to the catalytic subunit OSGEP in the complex. The sequence is that of EKC/KEOPS complex subunit GON7 from Mus musculus (Mouse).